Here is a 538-residue protein sequence, read N- to C-terminus: Acetylcholine receptor subunit alpha-type acr-7 (538 aa).

An N-terminal signal peptide occupies residues Met-1 to Gly-27. Residues Ser-28–Tyr-250 lie on the Extracellular side of the membrane. N-linked (GlcNAc...) asparagine glycosylation is found at Asn-41 and Asn-101. 2 disulfide bridges follow: Cys-160/Cys-174 and Cys-229/Cys-230. Helical transmembrane passes span Val-251 to Leu-271, Ile-280 to Met-300, and Val-313 to Leu-333. Topologically, residues Asn-334–Cys-513 are cytoplasmic. Residues Leu-514–Ile-534 traverse the membrane as a helical segment.

The protein belongs to the ligand-gated ion channel (TC 1.A.9) family. Acetylcholine receptor (TC 1.A.9.1) subfamily. In terms of assembly, forms a homooligomeric channel blocked by alpha-bungarotoxin. The structure is probably pentameric.

It is found in the postsynaptic cell membrane. The protein localises to the cell membrane. In terms of biological role, after binding acetylcholine, the AChR responds by an extensive change in conformation that affects all subunits and leads to opening of an ion-conducting channel across the plasma membrane. The polypeptide is Acetylcholine receptor subunit alpha-type acr-7 (acr-7) (Caenorhabditis elegans).